The sequence spans 115 residues: U3-lycotoxin-Ls1c (115 aa).

Residues 1–20 form the signal peptide; that stretch reads MKFVLLFGVLLVTLFSYSSA. Positions 21–44 are excised as a propeptide; sequence EMLDDFDQADEDELLSLIEKEEAR. Disulfide bonds link Cys-48/Cys-63, Cys-55/Cys-72, Cys-62/Cys-87, and Cys-74/Cys-85.

The protein belongs to the neurotoxin 19 (CSTX) family. 01 subfamily. In terms of tissue distribution, expressed by the venom gland.

Its subcellular location is the secreted. The polypeptide is U3-lycotoxin-Ls1c (Lycosa singoriensis (Wolf spider)).